Reading from the N-terminus, the 695-residue chain is UvrABC system protein C (695 aa).

The segment covering 1–10 has biased composition (basic and acidic residues); it reads MNQDPAETRD. The interval 1 to 53 is disordered; that stretch reads MNQDPAETRDTAAPPPADTTSPSPVSPELEPRSAPGAQDIDAASASLTVDEDD. The span at 18-27 shows a compositional bias: low complexity; that stretch reads DTTSPSPVSP. One can recognise a GIY-YIG domain in the interval 88 to 166; the sequence is TSPGVYRMLN…IKQLRPRFNV (79 aa). One can recognise a UVR domain in the interval 276–311; it reads RAVKQELAVEMEKASNELEFETAALYRDRLAALSAI.

This sequence belongs to the UvrC family. Interacts with UvrB in an incision complex.

The protein localises to the cytoplasm. Its function is as follows. The UvrABC repair system catalyzes the recognition and processing of DNA lesions. UvrC both incises the 5' and 3' sides of the lesion. The N-terminal half is responsible for the 3' incision and the C-terminal half is responsible for the 5' incision. The sequence is that of UvrABC system protein C from Rhodopseudomonas palustris (strain BisB5).